A 247-amino-acid polypeptide reads, in one-letter code: E3 ubiquitin-protein ligase RNF182 (247 aa).

The RING-type zinc finger occupies cysteine 20–arginine 68. The next 2 membrane-spanning stretches (helical) occupy residues valine 184–leucine 204 and leucine 211–phenylalanine 231.

As to quaternary structure, interacts with ATP6V0C.

The protein localises to the membrane. It localises to the cytoplasm. It catalyses the reaction S-ubiquitinyl-[E2 ubiquitin-conjugating enzyme]-L-cysteine + [acceptor protein]-L-lysine = [E2 ubiquitin-conjugating enzyme]-L-cysteine + N(6)-ubiquitinyl-[acceptor protein]-L-lysine.. Its pathway is protein modification; protein ubiquitination. Functionally, E3 ubiquitin-protein ligase that mediates the ubiquitination of ATP6V0C and targets it to degradation via the ubiquitin-proteasome pathway. Also plays a role in the inhibition of TLR-triggered innate immune response by mediating 'Lys'-48-linked ubiquitination and subsequent degradation of NF-kappa-B component RELA. This chain is E3 ubiquitin-protein ligase RNF182 (RNF182), found in Ailuropoda melanoleuca (Giant panda).